The following is a 478-amino-acid chain: Pentraxin-4 (478 aa).

The N-terminal stretch at 1-25 (MGCSWRKTLSFFLVFVPIYLHGASS) is a signal peptide. N-linked (GlcNAc...) asparagine glycosylation is found at Asn-67 and Asn-91. Basic and acidic residues predominate over residues 208–222 (RDRQELRAASEHRGP). The interval 208-262 (RDRQELRAASEHRGPPQDSSAPLQGRREPPASGSHRVLSGTAPKDPRQQAWSPQV) is disordered. The Pentraxin (PTX) domain maps to 269–473 (VGPTLVFPNA…GFVQGANCTC (205 aa)). The cysteines at positions 300 and 364 are disulfide-linked. Ca(2+)-binding residues include Asp-322, Asn-323, Glu-406, Gln-407, and Asp-408.

Ca(2+) is required as a cofactor. Widely expressed at low levels with highest levels in small intestine, testis and brain. Very low expression in endothelial cells, monocytes, neutrophils and lymphocytes. Isoform 1 is not expressed in small intestine.

The protein resides in the secreted. This Homo sapiens (Human) protein is Pentraxin-4 (PTX4).